The primary structure comprises 208 residues: Large ribosomal subunit protein uL4 (208 aa).

The segment at 50-83 (VKTRAEVSGGGRKPWKQKGTGRARQGSIRAPQWK) is disordered.

Belongs to the universal ribosomal protein uL4 family. In terms of assembly, part of the 50S ribosomal subunit.

Its function is as follows. One of the primary rRNA binding proteins, this protein initially binds near the 5'-end of the 23S rRNA. It is important during the early stages of 50S assembly. It makes multiple contacts with different domains of the 23S rRNA in the assembled 50S subunit and ribosome. Forms part of the polypeptide exit tunnel. The protein is Large ribosomal subunit protein uL4 of Mycoplasma mycoides subsp. mycoides SC (strain CCUG 32753 / NCTC 10114 / PG1).